We begin with the raw amino-acid sequence, 120 residues long: Seripauperin-24 (120 aa).

A signal peptide spans 1-20 (MVKLTSIAAGVAAIAATASA).

This sequence belongs to the SRP1/TIP1 family. Seripauperin subfamily. Post-translationally, O-glycosylated.

It localises to the secreted. Its subcellular location is the cell wall. In terms of biological role, component of the cell wall. The protein is Seripauperin-24 (PAU24) of Saccharomyces cerevisiae (strain ATCC 204508 / S288c) (Baker's yeast).